Consider the following 161-residue polypeptide: ATP synthase subunit b' (161 aa).

A helical transmembrane segment spans residues 26–45; sequence LPLMAIQFLLLAFVLDKIFY.

It belongs to the ATPase B chain family. In terms of assembly, F-type ATPases have 2 components, F(1) - the catalytic core - and F(0) - the membrane proton channel. F(1) has five subunits: alpha(3), beta(3), gamma(1), delta(1), epsilon(1). F(0) has four main subunits: a(1), b(1), b'(1) and c(10-14). The alpha and beta chains form an alternating ring which encloses part of the gamma chain. F(1) is attached to F(0) by a central stalk formed by the gamma and epsilon chains, while a peripheral stalk is formed by the delta, b and b' chains.

It localises to the cellular thylakoid membrane. Its function is as follows. F(1)F(0) ATP synthase produces ATP from ADP in the presence of a proton or sodium gradient. F-type ATPases consist of two structural domains, F(1) containing the extramembraneous catalytic core and F(0) containing the membrane proton channel, linked together by a central stalk and a peripheral stalk. During catalysis, ATP synthesis in the catalytic domain of F(1) is coupled via a rotary mechanism of the central stalk subunits to proton translocation. Component of the F(0) channel, it forms part of the peripheral stalk, linking F(1) to F(0). The b'-subunit is a diverged and duplicated form of b found in plants and photosynthetic bacteria. The polypeptide is ATP synthase subunit b' (Trichodesmium erythraeum (strain IMS101)).